A 394-amino-acid chain; its full sequence is 2-aminobenzenesulfonate 2,3-dioxygenase subunit alpha (394 aa).

The Rieske domain maps to 43–154; sequence WKFVCHVSEI…TETYLGLVFV (112 aa). Residues Cys-85, His-87, Cys-105, and His-108 each coordinate [2Fe-2S] cluster. Fe cation-binding residues include His-209 and His-213.

The protein belongs to the bacterial ring-hydroxylating dioxygenase alpha subunit family. As to quaternary structure, heterotetramer with a alpha2beta2 structure. It depends on [2Fe-2S] cluster as a cofactor. Requires Fe cation as cofactor.

The catalysed reaction is 2-aminobenzenesulfonate + NADH + O2 + 2 H(+) = 2,3-dihydroxybenzenesulfonate + NH4(+) + NAD(+). Inhibited by o-phenanthroline. Alpha subunit of the oxygenase component of the 2-aminobenzenesulfonate 2,3-dioxygenase system (deaminating) (ABSDOS). Can use 2-aminobenzenesulfonate (ABS), benzenesulfonate (BS), 4-toluenesulfonate (TS), 2-nitrobenzenesulfonate, 3- and 4-aminobenzenesulfonates, 4-chloro- and 4-hydroxybenzenesulfonates and pyridine-3-sulfonate as substrates. No desulfonation of ABS to aminocatechol or aminophenol detected. The protein is 2-aminobenzenesulfonate 2,3-dioxygenase subunit alpha of Alcaligenes sp.